A 60-amino-acid polypeptide reads, in one-letter code: Metallothionein (60 aa).

Residue M1 is modified to N-acetylmethionine. A beta region spans residues M1 to C28. Residues C4, C6, C12, C14, C18, C20, C23, C25, C28, C32, C33, C35, C36, C40, C43, C47, C49, C54, C58, and C59 each coordinate a divalent metal cation. The alpha stretch occupies residues T29–Q60.

This sequence belongs to the metallothionein superfamily. Type 1 family.

In terms of biological role, metallothioneins have a high content of cysteine residues that bind various heavy metals. This Pseudopleuronectes americanus (Winter flounder) protein is Metallothionein (mt).